A 372-amino-acid chain; its full sequence is Spermidine/putrescine import ATP-binding protein PotA (372 aa).

An ABC transporter domain is found at 11 to 241; that stretch reads IELRSIKKSY…PANLFVARFI (231 aa). Residue 43–50 participates in ATP binding; sequence GPSGCGKT.

The protein belongs to the ABC transporter superfamily. Spermidine/putrescine importer (TC 3.A.1.11.1) family. In terms of assembly, the complex is composed of two ATP-binding proteins (PotA), two transmembrane proteins (PotB and PotC) and a solute-binding protein (PotD).

The protein resides in the cell inner membrane. The enzyme catalyses ATP + H2O + polyamine-[polyamine-binding protein]Side 1 = ADP + phosphate + polyamineSide 2 + [polyamine-binding protein]Side 1.. Part of the ABC transporter complex PotABCD involved in spermidine/putrescine import. Responsible for energy coupling to the transport system. In Haemophilus influenzae (strain 86-028NP), this protein is Spermidine/putrescine import ATP-binding protein PotA.